The chain runs to 292 residues: Peroxisomal 2,4-dienoyl-CoA reductase [(3E)-enoyl-CoA-producing] (292 aa).

N-acetylalanine is present on Ala2. NADP(+) contacts are provided by residues 35–40, 60–64, and Asp86; these read GGGSGI and RSLPR. Arg60 contributes to the substrate binding site. Residues Arg88, Phe118, and 126–128 each bind substrate; that span reads SFN. Residue Lys151 is modified to N6-acetyllysine. NADP(+)-binding positions include Lys182 and 208-214; that span reads PGPISGT. Residue Arg219 participates in substrate binding. Position 287 is a phosphoserine (Ser287). The Microbody targeting signal signature appears at 290 to 292; it reads AKL. Lys291 carries the N6-acetyllysine modification.

Belongs to the short-chain dehydrogenases/reductases (SDR) family. 2,4-dienoyl-CoA reductase subfamily. Monomer, dimer and oligomer.

It is found in the peroxisome. The catalysed reaction is a (2E,4Z)-dienoyl-CoA + NADPH + H(+) = a 4,5-saturated-(3E)-enoyl-CoA + NADP(+). The enzyme catalyses a (2E,4E)-dienoyl-CoA + NADPH + H(+) = a 4,5-saturated-(3E)-enoyl-CoA + NADP(+). It catalyses the reaction (2E,4E)-hexadienoyl-CoA + NADPH + H(+) = (3E)-hexenoyl-CoA + NADP(+). It carries out the reaction (2E,4E)-decadienoyl-CoA + NADPH + H(+) = (3E)-decenoyl-CoA + NADP(+). The catalysed reaction is (2E,4Z,7Z,10Z,13Z,16Z,19Z)-docosaheptaenoyl-CoA + NADPH + H(+) = (3E,7Z,10Z,13Z,16Z,19Z)-docosahexaenoyl-CoA + NADP(+). Auxiliary enzyme of beta-oxidation. Participates in the degradation of unsaturated fatty enoyl-CoA esters having double bonds in both even- and odd-numbered positions in peroxisome. Catalyzes the NADP-dependent reduction of 2,4-dienoyl-CoA to yield trans-3-enoyl-CoA. Has activity towards short and medium chain 2,4-dienoyl-CoAs, but also towards 2,4,7,10,13,16,19-docosaheptaenoyl-CoA, suggesting that it does not constitute a rate limiting step in the peroxisomal degradation of docosahexaenoic acid. This is Peroxisomal 2,4-dienoyl-CoA reductase [(3E)-enoyl-CoA-producing] (DECR2) from Pongo abelii (Sumatran orangutan).